A 177-amino-acid chain; its full sequence is GTP-dependent dephospho-CoA kinase (177 aa).

GTP is bound by residues Asp48, Val49, Val50, Asp67, Lys69, and Glu124.

This sequence belongs to the GTP-dependent DPCK family.

It carries out the reaction 3'-dephospho-CoA + GTP = GDP + CoA + H(+). It participates in cofactor biosynthesis; coenzyme A biosynthesis. Its function is as follows. Catalyzes the GTP-dependent phosphorylation of the 3'-hydroxyl group of dephosphocoenzyme A to form coenzyme A (CoA). The chain is GTP-dependent dephospho-CoA kinase from Pyrococcus furiosus (strain ATCC 43587 / DSM 3638 / JCM 8422 / Vc1).